Consider the following 403-residue polypeptide: Phosphopentomutase (403 aa).

Mn(2+)-binding residues include aspartate 13, aspartate 298, histidine 303, aspartate 339, histidine 340, and histidine 351.

The protein belongs to the phosphopentomutase family. Requires Mn(2+) as cofactor.

Its subcellular location is the cytoplasm. The enzyme catalyses 2-deoxy-alpha-D-ribose 1-phosphate = 2-deoxy-D-ribose 5-phosphate. It carries out the reaction alpha-D-ribose 1-phosphate = D-ribose 5-phosphate. It functions in the pathway carbohydrate degradation; 2-deoxy-D-ribose 1-phosphate degradation; D-glyceraldehyde 3-phosphate and acetaldehyde from 2-deoxy-alpha-D-ribose 1-phosphate: step 1/2. Functionally, isomerase that catalyzes the conversion of deoxy-ribose 1-phosphate (dRib-1-P) and ribose 1-phosphate (Rib-1-P) to deoxy-ribose 5-phosphate (dRib-5-P) and ribose 5-phosphate (Rib-5-P), respectively. The protein is Phosphopentomutase of Streptococcus uberis (strain ATCC BAA-854 / 0140J).